A 735-amino-acid chain; its full sequence is Phosphoribosylformylglycinamidine synthase subunit PurL (735 aa).

H50 is an active-site residue. ATP-binding residues include Y53 and K92. Residue E94 coordinates Mg(2+). Residues 95 to 98 (SHNH) and R117 each bind substrate. H96 functions as the Proton acceptor in the catalytic mechanism. Residue D118 participates in Mg(2+) binding. Q241 contributes to the substrate binding site. Mg(2+) is bound at residue D269. A substrate-binding site is contributed by 313-315 (ESQ). 2 residues coordinate ATP: D495 and G532. Position 533 (N533) interacts with Mg(2+). S535 contributes to the substrate binding site.

It belongs to the FGAMS family. As to quaternary structure, monomer. Part of the FGAM synthase complex composed of 1 PurL, 1 PurQ and 2 PurS subunits.

The protein localises to the cytoplasm. It catalyses the reaction N(2)-formyl-N(1)-(5-phospho-beta-D-ribosyl)glycinamide + L-glutamine + ATP + H2O = 2-formamido-N(1)-(5-O-phospho-beta-D-ribosyl)acetamidine + L-glutamate + ADP + phosphate + H(+). Its pathway is purine metabolism; IMP biosynthesis via de novo pathway; 5-amino-1-(5-phospho-D-ribosyl)imidazole from N(2)-formyl-N(1)-(5-phospho-D-ribosyl)glycinamide: step 1/2. Its function is as follows. Part of the phosphoribosylformylglycinamidine synthase complex involved in the purines biosynthetic pathway. Catalyzes the ATP-dependent conversion of formylglycinamide ribonucleotide (FGAR) and glutamine to yield formylglycinamidine ribonucleotide (FGAM) and glutamate. The FGAM synthase complex is composed of three subunits. PurQ produces an ammonia molecule by converting glutamine to glutamate. PurL transfers the ammonia molecule to FGAR to form FGAM in an ATP-dependent manner. PurS interacts with PurQ and PurL and is thought to assist in the transfer of the ammonia molecule from PurQ to PurL. The chain is Phosphoribosylformylglycinamidine synthase subunit PurL from Bartonella henselae (strain ATCC 49882 / DSM 28221 / CCUG 30454 / Houston 1) (Rochalimaea henselae).